The chain runs to 51 residues: Small integral membrane protein 38 (51 aa).

Residues 13 to 33 (PLLALLVVILLARLILWSCLG) form a helical membrane-spanning segment.

The protein resides in the membrane. This is Small integral membrane protein 38 from Homo sapiens (Human).